The sequence spans 211 residues: Large ribosomal subunit protein uL3 (211 aa).

Q150 carries the post-translational modification N5-methylglutamine.

This sequence belongs to the universal ribosomal protein uL3 family. In terms of assembly, part of the 50S ribosomal subunit. Forms a cluster with proteins L14 and L19. In terms of processing, methylated by PrmB.

One of the primary rRNA binding proteins, it binds directly near the 3'-end of the 23S rRNA, where it nucleates assembly of the 50S subunit. The protein is Large ribosomal subunit protein uL3 of Stutzerimonas stutzeri (strain A1501) (Pseudomonas stutzeri).